Consider the following 515-residue polypeptide: Cytochrome P450 705A22 (515 aa).

The helical transmembrane segment at 9 to 29 (FQNCFIFILIFLLTFLCFFFF) threads the bilayer. Cysteine 454 contributes to the heme binding site.

The protein belongs to the cytochrome P450 family. Heme is required as a cofactor.

The protein resides in the membrane. Plays a role in the gravitropic response of the inflorescence stems and roots. May affect the synthesis of flavonols that have a role in regulating auxin transport. The chain is Cytochrome P450 705A22 from Arabidopsis thaliana (Mouse-ear cress).